The following is a 274-amino-acid chain: Phosphatidylglycerol--prolipoprotein diacylglyceryl transferase (274 aa).

Helical transmembrane passes span 24–44 (WYALAYIVGLLGGWWYTRFLS), 60–80 (LLVWATLGTILGGRLGYVVFY), 96–116 (WHGGMSFHGGLVGVITATVLF), and 122–142 (LSVARVGDLVALVAPLGLFFG). Arginine 143 lines the a 1,2-diacyl-sn-glycero-3-phospho-(1'-sn-glycerol) pocket. The next 3 membrane-spanning stretches (helical) occupy residues 182–202 (ATLEGLVLFCLLGLLWRFTAL), 207–227 (GQIIGLFLIGYGLSRITAEFF), and 241–261 (VTMGQILSLPMILAGIVVFVV).

The protein belongs to the Lgt family.

It localises to the cell inner membrane. It catalyses the reaction L-cysteinyl-[prolipoprotein] + a 1,2-diacyl-sn-glycero-3-phospho-(1'-sn-glycerol) = an S-1,2-diacyl-sn-glyceryl-L-cysteinyl-[prolipoprotein] + sn-glycerol 1-phosphate + H(+). It functions in the pathway protein modification; lipoprotein biosynthesis (diacylglyceryl transfer). In terms of biological role, catalyzes the transfer of the diacylglyceryl group from phosphatidylglycerol to the sulfhydryl group of the N-terminal cysteine of a prolipoprotein, the first step in the formation of mature lipoproteins. This Rhodospirillum rubrum (strain ATCC 11170 / ATH 1.1.1 / DSM 467 / LMG 4362 / NCIMB 8255 / S1) protein is Phosphatidylglycerol--prolipoprotein diacylglyceryl transferase.